Here is a 215-residue protein sequence, read N- to C-terminus: Urease accessory protein UreE (215 aa).

The segment at 134-215 is disordered; it reads FDPEGGAYAP…HGHSHKHDHK (82 aa). The segment covering 164-206 has biased composition (basic and acidic residues); the sequence is GHHDHADHEHDHKHDHGKHDHAGHDHAHDHHVHDEHCGHDHGH.

This sequence belongs to the UreE family.

It localises to the cytoplasm. Its function is as follows. Involved in urease metallocenter assembly. Binds nickel. Probably functions as a nickel donor during metallocenter assembly. This Rhodopseudomonas palustris (strain HaA2) protein is Urease accessory protein UreE.